The primary structure comprises 154 residues: 3-hydroxyacyl-[acyl-carrier-protein] dehydratase FabZ (154 aa).

Histidine 57 is a catalytic residue.

This sequence belongs to the thioester dehydratase family. FabZ subfamily.

Its subcellular location is the cytoplasm. It catalyses the reaction a (3R)-hydroxyacyl-[ACP] = a (2E)-enoyl-[ACP] + H2O. Involved in unsaturated fatty acids biosynthesis. Catalyzes the dehydration of short chain beta-hydroxyacyl-ACPs and long chain saturated and unsaturated beta-hydroxyacyl-ACPs. This is 3-hydroxyacyl-[acyl-carrier-protein] dehydratase FabZ from Sinorhizobium fredii (strain NBRC 101917 / NGR234).